The sequence spans 564 residues: O-fucosyltransferase 5 (564 aa).

Residues 1–28 (MVRNSSDEEEDHRNLIPQNDTRDNDLNL) form a disordered region. A helical; Signal-anchor for type II membrane protein transmembrane segment spans residues 70–90 (YVVAAVSLTLFVGLLFLFTDT). Asparagine 129, asparagine 134, and asparagine 174 each carry an N-linked (GlcNAc...) asparagine glycan. Residues 413–415 (HLR) and 529–530 (TF) each bind substrate.

The protein belongs to the glycosyltransferase GT106 family.

It is found in the membrane. The protein operates within glycan metabolism. The protein is O-fucosyltransferase 5 of Arabidopsis thaliana (Mouse-ear cress).